The chain runs to 229 residues: UPF0173 metal-dependent hydrolase SERP1270 (229 aa).

It belongs to the UPF0173 family.

The protein is UPF0173 metal-dependent hydrolase SERP1270 of Staphylococcus epidermidis (strain ATCC 35984 / DSM 28319 / BCRC 17069 / CCUG 31568 / BM 3577 / RP62A).